A 272-amino-acid polypeptide reads, in one-letter code: 2-C-methyl-D-erythritol 4-phosphate cytidylyltransferase (272 aa).

The protein belongs to the IspD/TarI cytidylyltransferase family. IspD subfamily.

It catalyses the reaction 2-C-methyl-D-erythritol 4-phosphate + CTP + H(+) = 4-CDP-2-C-methyl-D-erythritol + diphosphate. It functions in the pathway isoprenoid biosynthesis; isopentenyl diphosphate biosynthesis via DXP pathway; isopentenyl diphosphate from 1-deoxy-D-xylulose 5-phosphate: step 2/6. In terms of biological role, catalyzes the formation of 4-diphosphocytidyl-2-C-methyl-D-erythritol from CTP and 2-C-methyl-D-erythritol 4-phosphate (MEP). The polypeptide is 2-C-methyl-D-erythritol 4-phosphate cytidylyltransferase (Xanthomonas oryzae pv. oryzae (strain PXO99A)).